Consider the following 226-residue polypeptide: Probable N-acetyl-alpha-D-glucosaminyl L-malate deacetylase 2 (226 aa).

The Zn(2+) site is built by histidine 13, aspartate 16, and histidine 127.

Belongs to the PIGL family. Requires Zn(2+) as cofactor.

The catalysed reaction is (S)-malyl N-acetyl-alpha-D-glucosaminide + H2O = (S)-malyl alpha-D-glucosaminide + acetate. Involved in bacillithiol (BSH) biosynthesis. Catalyzes the second step of the pathway, the deacetylation of N-acetylglucosaminylmalate (GlcNAc-Mal) to glucosamine malate (GlcN-Mal). Could also be involved in bacillithiol-detoxifying pathways through formation of S-mercapturic adducts. This chain is Probable N-acetyl-alpha-D-glucosaminyl L-malate deacetylase 2, found in Bacillus anthracis.